The following is a 587-amino-acid chain: Kelch-like protein 3 (587 aa).

Positions 1–22 (MDGESIKPSSQPLIQTGDDEKN) are disordered. Position 10 is a phosphoserine (S10). One can recognise a BTB domain in the interval 50-117 (CDVMIVAEDV…IYTAEIEVTE (68 aa)). The BACK domain maps to 152 to 254 (CLGIRAFADV…PRDYLVQTVE (103 aa)). Position 295 is a phosphothreonine (T295). Kelch repeat units lie at residues 302 to 347 (VMIV…FMAG), 348 to 394 (HVYA…VLND), 396 to 441 (LYAV…VVEG), 442 to 490 (KLYA…VLSG), 491 to 537 (QLYA…AVNG), and 539 to 585 (LYVV…VIHK). The residue at position 375 (T375) is a Phosphothreonine. S376 and S433 each carry phosphoserine.

Belongs to the KLHL3 family. In terms of assembly, homodimer. Component of the BCR(KLHL3) E3 ubiquitin ligase complex, at least composed of CUL3 and KLHL3 and RBX1. Interacts with CLDN8. In terms of processing, phosphorylation at Ser-433 by PKA or PKC decreases the interaction with WNK1 and WNK4, leading to inhibit their degradation by the BCR(KLHL3) complex. Phosphorylated at Ser-433 by PKC in response to angiotensin II signaling, decreasing ability to promote degradation of WNK1 and WNK4, leading to activation of Na-Cl cotransporter SLC12A3/NCC. Phosphorylation at Ser-433 is increased by insulin. Dephosphorylated at Ser-433 by calcineurin PPP3CA, promoting degradation of WNK1 and WNK4.

It is found in the cytoplasm. Its subcellular location is the cytoskeleton. The protein localises to the cytosol. Its pathway is protein modification; protein ubiquitination. In terms of biological role, substrate-specific adapter of a BCR (BTB-CUL3-RBX1) E3 ubiquitin ligase complex that acts as a regulator of ion transport in the distal nephron. The BCR(KLHL3) complex acts by mediating ubiquitination and degradation of WNK1 and WNK4, two activators of Na-Cl cotransporter SLC12A3/NCC in distal convoluted tubule cells of kidney, thereby regulating NaCl reabsorption. The BCR(KLHL3) complex also mediates ubiquitination and degradation of WNK3. The BCR(KLHL3) complex also mediates ubiquitination of CLDN8, a tight-junction protein required for paracellular chloride transport in the kidney, leading to its degradation. This is Kelch-like protein 3 (KLHL3) from Bos taurus (Bovine).